A 420-amino-acid polypeptide reads, in one-letter code: Tyrosine--tRNA ligase 2 (420 aa).

Tyrosine 36 provides a ligand contact to L-tyrosine. A 'HIGH' region motif is present at residues 41–50 (PTADSLHIGH). The L-tyrosine site is built by tyrosine 171 and glutamine 175. The short motif at 231 to 235 (KFGKT) is the 'KMSKS' region element. Residue lysine 234 coordinates ATP. One can recognise an S4 RNA-binding domain in the interval 354 to 420 (LSLVDLLVTS…GKKKYFLLKY (67 aa)).

It belongs to the class-I aminoacyl-tRNA synthetase family. TyrS type 1 subfamily. In terms of assembly, homodimer.

The protein resides in the cytoplasm. The catalysed reaction is tRNA(Tyr) + L-tyrosine + ATP = L-tyrosyl-tRNA(Tyr) + AMP + diphosphate + H(+). In terms of biological role, catalyzes the attachment of tyrosine to tRNA(Tyr) in a two-step reaction: tyrosine is first activated by ATP to form Tyr-AMP and then transferred to the acceptor end of tRNA(Tyr). This Enterococcus faecalis (strain ATCC 700802 / V583) protein is Tyrosine--tRNA ligase 2.